A 328-amino-acid polypeptide reads, in one-letter code: 3,4-dihydroxyphenylacetaldehyde synthase 2 (328 aa).

Residue N111 is part of the active site. An N6-(pyridoxal phosphate)lysine modification is found at K222.

It belongs to the group II decarboxylase family. It depends on pyridoxal 5'-phosphate as a cofactor.

It catalyses the reaction L-dopa + O2 + H2O + H(+) = 3,4-dihydroxyphenylacetaldehyde + H2O2 + NH4(+) + CO2. Catalyzes the decarboxylation-oxidative deamination of L-3,4-dihydroxyphenylalanine (L-DOPA) to 3,4-dihydroxylphenylacetaldehyde (DHPAA). Involved in cuticle development. Probably responsible for the protein cross-linking during the development of flexible cuticles. The protein is 3,4-dihydroxyphenylacetaldehyde synthase 2 (amd) of Drosophila simulans (Fruit fly).